Reading from the N-terminus, the 84-residue chain is Sulfur carrier protein TusA (84 aa).

Cys19 serves as the catalytic Cysteine persulfide intermediate.

This sequence belongs to the sulfur carrier protein TusA family. In terms of assembly, interacts with IscS.

The protein localises to the cytoplasm. It participates in tRNA modification. Its function is as follows. Sulfur carrier protein involved in sulfur trafficking in the cell. Part of a sulfur-relay system required for 2-thiolation during synthesis of 2-thiouridine of the modified wobble base 5-methylaminomethyl-2-thiouridine (mnm(5)s(2)U) in tRNA. Interacts with IscS and stimulates its cysteine desulfurase activity. Accepts an activated sulfur from IscS, which is then transferred to TusD, and thus determines the direction of sulfur flow from IscS to 2-thiouridine formation. Also appears to be involved in sulfur transfer for the biosynthesis of molybdopterin. This Sodalis glossinidius (strain morsitans) protein is Sulfur carrier protein TusA.